Here is a 255-residue protein sequence, read N- to C-terminus: tRNA pseudouridine synthase A (255 aa).

The active-site Nucleophile is the D52. Y111 contributes to the substrate binding site.

It belongs to the tRNA pseudouridine synthase TruA family. Homodimer.

It catalyses the reaction uridine(38/39/40) in tRNA = pseudouridine(38/39/40) in tRNA. Functionally, formation of pseudouridine at positions 38, 39 and 40 in the anticodon stem and loop of transfer RNAs. In Nitrobacter winogradskyi (strain ATCC 25391 / DSM 10237 / CIP 104748 / NCIMB 11846 / Nb-255), this protein is tRNA pseudouridine synthase A.